We begin with the raw amino-acid sequence, 110 residues long: Putative UPF0377 protein YKL223W (110 aa).

This sequence belongs to the UPF0377 family.

The chain is Putative UPF0377 protein YKL223W from Saccharomyces cerevisiae (strain ATCC 204508 / S288c) (Baker's yeast).